The sequence spans 335 residues: Holliday junction branch migration complex subunit RuvB (335 aa).

A large ATPase domain (RuvB-L) region spans residues 1–183; the sequence is MDERIISSET…FGVIDHLEFY (183 aa). ATP-binding positions include leucine 22, arginine 23, glycine 64, lysine 67, threonine 68, threonine 69, 130-132, arginine 173, tyrosine 183, and arginine 220; that span reads EDY. Mg(2+) is bound at residue threonine 68. Positions 184-254 are small ATPAse domain (RuvB-S); it reads TEEQLTEIVL…LAKEALTLLQ (71 aa). A head domain (RuvB-H) region spans residues 257–335; the sequence is PRGLDTIDQK…HLGISYEKEV (79 aa). DNA contacts are provided by arginine 293, arginine 312, and arginine 317.

It belongs to the RuvB family. As to quaternary structure, homohexamer. Forms an RuvA(8)-RuvB(12)-Holliday junction (HJ) complex. HJ DNA is sandwiched between 2 RuvA tetramers; dsDNA enters through RuvA and exits via RuvB. An RuvB hexamer assembles on each DNA strand where it exits the tetramer. Each RuvB hexamer is contacted by two RuvA subunits (via domain III) on 2 adjacent RuvB subunits; this complex drives branch migration. In the full resolvosome a probable DNA-RuvA(4)-RuvB(12)-RuvC(2) complex forms which resolves the HJ.

It is found in the cytoplasm. It catalyses the reaction ATP + H2O = ADP + phosphate + H(+). Functionally, the RuvA-RuvB-RuvC complex processes Holliday junction (HJ) DNA during genetic recombination and DNA repair, while the RuvA-RuvB complex plays an important role in the rescue of blocked DNA replication forks via replication fork reversal (RFR). RuvA specifically binds to HJ cruciform DNA, conferring on it an open structure. The RuvB hexamer acts as an ATP-dependent pump, pulling dsDNA into and through the RuvAB complex. RuvB forms 2 homohexamers on either side of HJ DNA bound by 1 or 2 RuvA tetramers; 4 subunits per hexamer contact DNA at a time. Coordinated motions by a converter formed by DNA-disengaged RuvB subunits stimulates ATP hydrolysis and nucleotide exchange. Immobilization of the converter enables RuvB to convert the ATP-contained energy into a lever motion, pulling 2 nucleotides of DNA out of the RuvA tetramer per ATP hydrolyzed, thus driving DNA branch migration. The RuvB motors rotate together with the DNA substrate, which together with the progressing nucleotide cycle form the mechanistic basis for DNA recombination by continuous HJ branch migration. Branch migration allows RuvC to scan DNA until it finds its consensus sequence, where it cleaves and resolves cruciform DNA. In Listeria innocua serovar 6a (strain ATCC BAA-680 / CLIP 11262), this protein is Holliday junction branch migration complex subunit RuvB.